Reading from the N-terminus, the 252-residue chain is Carbohydrate deacetylase (252 aa).

Residues H59 and H122 each contribute to the Mg(2+) site.

It belongs to the YdjC deacetylase family. Homodimer. The cofactor is Mg(2+).

Probably catalyzes the deacetylation of acetylated carbohydrates an important step in the degradation of oligosaccharides. This Vibrio cholerae serotype O1 (strain ATCC 39315 / El Tor Inaba N16961) protein is Carbohydrate deacetylase.